A 668-amino-acid polypeptide reads, in one-letter code: RNA-binding protein PIN4 (668 aa).

A disordered region spans residues 1 to 77; that stretch reads METSSFENAP…NLNNAPTNGA (77 aa). The segment covering 8–23 has biased composition (low complexity); the sequence is NAPPAAINDAQDNNIN. Residues 24–36 show a composition bias toward polar residues; sequence TETNDQETNQQSI. Residues 37–46 show a composition bias toward basic and acidic residues; the sequence is ETRDAIDKEN. Polar residues predominate over residues 47–74; the sequence is GVQTETGENSAKNAEQNVSSTNLNNAPT. Ser56 carries the post-translational modification Phosphoserine. An RRM domain is found at 85 to 163; that stretch reads NAIVIKNIPF…RKLKVEYKKM (79 aa). Basic and acidic residues predominate over residues 168-188; that stretch reads ERERIEREKREKRGQLEEQHR. A disordered region spans residues 168-214; it reads ERERIEREKREKRGQLEEQHRSSSNLSLDSLSKMSGSGNNNTSNNQL. Ser189, Ser191, Ser194, and Ser197 each carry phosphoserine. Low complexity predominate over residues 189–212; sequence SSSNLSLDSLSKMSGSGNNNTSNN. Thr305 carries the post-translational modification Phosphothreonine. Disordered regions lie at residues 374–398 and 420–570; these read QQQG…NRSQ and VNNS…QRVP. Residue Ser393 is modified to Phosphoserine. Over residues 420–449 the composition is skewed to low complexity; sequence VNNSSNSNTINSNNGNGNNVIINNNSASST. Residues 450-478 show a composition bias toward polar residues; the sequence is PKISSQGQFSMQPTLTSPKMNIHHSSQYN. Ser466 is subject to Phosphoserine. Over residues 479 to 508 the composition is skewed to low complexity; it reads SADQPQQPQPQTQQNVQSAAQQQQSFLRQQ. Residues 509 to 551 are compositionally biased toward polar residues; the sequence is ATLTPSSRIPSGYSANHYQINSVNPLLRNSQISPPNSQIPINS. At Ser541 the chain carries Phosphoserine. The span at 552 to 567 shows a compositional bias: low complexity; the sequence is QTLSQAQPPAQSQTQQ. Phosphoserine is present on residues Ser636, Ser638, Ser640, Ser653, and Ser655.

In terms of assembly, interacts with RAD53. Post-translationally, hyperphosphorylated in response to DNA damage by MEC1.

The protein resides in the cytoplasm. In terms of biological role, involved in normal G2/M phase transition of the mitotic cell cycle. In association with RAD53, also involved in checkpoint control in response to DNA damage. This is RNA-binding protein PIN4 (PIN4) from Saccharomyces cerevisiae (strain ATCC 204508 / S288c) (Baker's yeast).